The sequence spans 423 residues: AP-1 complex subunit mu-2 (423 aa).

The MHD domain occupies K168–R421.

Belongs to the adaptor complexes medium subunit family. Adaptor protein complex 1 (AP-1) is a heterotetramer composed of two large adaptins (gamma-type subunit AP1G1 and beta-type subunit AP1B1), a medium adaptin (mu-type subunit AP1M1 or AP1M2) and a small adaptin (sigma-type subunit AP1S1 or AP1S2 or AP1S3). Interacts with P2X4. Post-translationally, phosphorylation of membrane-bound AP1M1/AP1M2 increases its affinity for sorting signals.

The protein resides in the cytoplasmic vesicle. The protein localises to the clathrin-coated vesicle membrane. It localises to the golgi apparatus. Its function is as follows. Subunit of clathrin-associated adaptor protein complex 1 that plays a role in protein sorting in the trans-Golgi network (TGN) and endosomes. The AP complexes mediate the recruitment of clathrin to membranes and the recognition of sorting signals within the cytosolic tails of transmembrane cargo molecules. The protein is AP-1 complex subunit mu-2 of Bos taurus (Bovine).